A 69-amino-acid polypeptide reads, in one-letter code: Lantibiotic lichenicidin A2 (69 aa).

Positions 1 to 37 (MKNSAAREAFKGANHPAGMVSEEELKALVGGNDVNPE) are excised as a propeptide. Position 38 is a 2-oxobutanoic acid (Thr38). A (Z)-2,3-didehydrobutyrine mark is found at Thr39, Thr42, and Thr43. The lanthionine (Ser-Cys) cross-link spans 44–48 (SSWTC). Ser45 carries the 2,3-didehydroalanine (Ser) modification. A (Z)-2,3-didehydrobutyrine mark is found at Thr50 and Thr54. A cross-link (lanthionine (Ser-Cys)) is located at residues 56–60 (SASLC). 2 consecutive cross-links (beta-methyllanthionine (Thr-Cys)) follow at residues 62–65 (TTKC) and 66–69 (TSRC). At Thr63 the chain carries (Z)-2,3-didehydrobutyrine.

Maturation of lantibiotics involves the enzymatic conversion of Thr, and Ser into dehydrated AA and the formation of thioether bonds with cysteine. This is followed by membrane translocation and cleavage of the modified precursor.

Its subcellular location is the secreted. The protein localises to the cell wall. In terms of biological role, lanthionine-containing peptide antibiotic (lantibiotic) active on Gram-positive bacteria. The bactericidal activity of lantibiotics is based on depolarization of energized bacterial cytoplasmic membranes, initiated by the formation of aqueous transmembrane pores. When present individually, LchA2 exhibits activity towards L.lactis HP. When combined with LchA1, it displays activity towards a broad spectrum of non-pathogenic and pathogenic Gram-positive bacteria including strains of L.monocytogenes, methicillin-resistant S.aureus, S.pneumoniae and strains of vancomycin-resistant enterococci, but not towards E.faecium L4001 and BM4147-1. Combined LchA1 and LchA2 peptides also inhibit Bacillus sp. HIL-Y85/54728, L.lactis DPC3417 and B.halodurans C-125, which produce lantibiotics themselves. Inactivated by proteinase K and pronase E, but not by trypsin and chymotrypsin. The protein is Lantibiotic lichenicidin A2 of Bacillus licheniformis (strain ATCC 14580 / DSM 13 / JCM 2505 / CCUG 7422 / NBRC 12200 / NCIMB 9375 / NCTC 10341 / NRRL NRS-1264 / Gibson 46).